A 396-amino-acid polypeptide reads, in one-letter code: Elongation factor Tu (396 aa).

The tr-type G domain maps to 10 to 206 (KPHVNVGTIG…ALDTYIPTPE (197 aa)). The interval 19–26 (GHVDHGKT) is G1. Position 19 to 26 (19 to 26 (GHVDHGKT)) interacts with GTP. Position 26 (Thr-26) interacts with Mg(2+). Positions 60-64 (GITIN) are G2. The G3 stretch occupies residues 81-84 (DCPG). GTP contacts are provided by residues 81 to 85 (DCPGH) and 136 to 139 (NKCD). The G4 stretch occupies residues 136–139 (NKCD). Positions 174–176 (SAK) are G5.

This sequence belongs to the TRAFAC class translation factor GTPase superfamily. Classic translation factor GTPase family. EF-Tu/EF-1A subfamily. Monomer.

It localises to the cytoplasm. It carries out the reaction GTP + H2O = GDP + phosphate + H(+). GTP hydrolase that promotes the GTP-dependent binding of aminoacyl-tRNA to the A-site of ribosomes during protein biosynthesis. The sequence is that of Elongation factor Tu from Paraburkholderia xenovorans (strain LB400).